A 471-amino-acid chain; its full sequence is Tryptophan--tRNA ligase, cytoplasmic (471 aa).

One can recognise a WHEP-TRS domain in the interval 8 to 64 (SLLELFNSIATQGELVRSLKAGNASKDEIDSAVKMLVSLKMSYKAAAGEDYKADCPP). The disordered stretch occupies residues 59–79 (KADCPPGNPAPTSNHGPDATE). Position 154 is an N6-succinyllysine (lysine 154). The short motif at 164-173 (PSSEAMHVGH) is the 'HIGH' region element. Residues 349–353 (KMSAS) carry the 'KMSKS' region motif. At serine 351 the chain carries Phosphoserine.

Belongs to the class-I aminoacyl-tRNA synthetase family. As to quaternary structure, homodimer. Interacts with an oxidized form of GAPDH. GAPDH stimulates the aminoacylation activity of isoform 2. In terms of processing, proteolytic cleavage generates 2 forms; T1-TrpRS and T2-TrpRS.

The protein localises to the cytoplasm. It carries out the reaction tRNA(Trp) + L-tryptophan + ATP = L-tryptophyl-tRNA(Trp) + AMP + diphosphate + H(+). In terms of biological role, catalyzes the attachment of tryptophan to tRNA(Trp) in a two-step reaction: tryptophan is first activated by ATP to form Trp-AMP and then transferred to the acceptor end of the tRNA(Trp). Functionally, has no angiostatic activity. Possesses an angiostatic activity but has no aminoacylation activity. Inhibits fluid shear stress-activated responses of endothelial cells. Regulates ERK, Akt, and eNOS activation pathways that are associated with angiogenesis, cytoskeletal reorganization and shear stress-responsive gene expression. Its function is as follows. Has an angiostatic activity. In Homo sapiens (Human), this protein is Tryptophan--tRNA ligase, cytoplasmic.